We begin with the raw amino-acid sequence, 443 residues long: Tol-Pal system protein TolB (443 aa).

The N-terminal stretch at 1-33 is a signal peptide; the sequence is MKIGIINTKIRTVFSAFACMIAASLVCTMPARA.

Belongs to the TolB family. As to quaternary structure, the Tol-Pal system is composed of five core proteins: the inner membrane proteins TolA, TolQ and TolR, the periplasmic protein TolB and the outer membrane protein Pal. They form a network linking the inner and outer membranes and the peptidoglycan layer.

The protein resides in the periplasm. Part of the Tol-Pal system, which plays a role in outer membrane invagination during cell division and is important for maintaining outer membrane integrity. The polypeptide is Tol-Pal system protein TolB (Brucella abortus (strain S19)).